Reading from the N-terminus, the 371-residue chain is Deoxyuridine 5'-triphosphate nucleotidohydrolase (371 aa).

Residues 260–262 (RSS) and 366–367 (FG) contribute to the substrate site. Residues 350-371 (NEFDAEAPPSERGTGGFGSTGI) are disordered. Positions 362–371 (GTGGFGSTGI) are enriched in gly residues.

This sequence belongs to the dUTPase family. The cofactor is Mg(2+).

It catalyses the reaction dUTP + H2O = dUMP + diphosphate + H(+). Its function is as follows. Involved in nucleotide metabolism: produces dUMP, the immediate precursor of thymidine nucleotides and decreases the intracellular concentration of dUTP to avoid uracil incorporation into viral DNA. This chain is Deoxyuridine 5'-triphosphate nucleotidohydrolase, found in Homo sapiens (Human).